The following is a 187-amino-acid chain: Large ribosomal subunit protein eL18y (187 aa).

The disordered stretch occupies residues 151–187 (FGPAPGVPHSHSKPYVRAKGRKFEKARGKRKSRGFKV). 2 stretches are compositionally biased toward basic residues: residues 160-170 (SHSKPYVRAKG) and 177-187 (RGKRKSRGFKV).

This sequence belongs to the eukaryotic ribosomal protein eL18 family. Interacts with NIK1. Interacts directly with EXA1. In terms of tissue distribution, ubiquitous.

It is found in the cytoplasm. The chain is Large ribosomal subunit protein eL18y (RPL18B) from Arabidopsis thaliana (Mouse-ear cress).